A 420-amino-acid polypeptide reads, in one-letter code: MKTLIARHKAGEHIGICSVCSAHPLVIEAALAFDRNSTRKVLIEATSNQVNQFGGYTGMTPADFREFVFAIANKVGFARERIILGGDHLGPNCWQQENADAAMEKSVELVKAYVRAGFSKIHLDASMSCAGDPIPLAPETVAERAAVLCLAAESVATDCQREQLSYVIGTEVPVPGGEASAIQSVHITQVEDAANTLRTHQKAFIARGLAEALTRVIAIVVQPGVEFDHINIIHYQAQEAQALAQWIEKTKMVYEAHSTDYQTQAAYRELVRDHFAILKVGPALTFALREAVFALAQIEQELIAPENRSGCLAVIEEVMLDEPQYWKKYYRTGFHDSLLDIRYSLSDRIRYYWPHSRIKNSVETMMVNLEGVDIPLGMISQYLPKQFERIQSGELSAIPHQLIMDKIYDVLRAYRYGCAE.

This sequence belongs to the GatZ/KbaZ family. GatZ subfamily. In terms of assembly, forms a complex with GatY.

It participates in carbohydrate metabolism; D-tagatose 6-phosphate degradation; D-glyceraldehyde 3-phosphate and glycerone phosphate from D-tagatose 6-phosphate: step 2/2. Functionally, component of the tagatose-1,6-bisphosphate aldolase GatYZ that is required for full activity and stability of the Y subunit. Could have a chaperone-like function for the proper and stable folding of GatY. When expressed alone, GatZ does not show any aldolase activity. Is involved in the catabolism of galactitol. This is D-tagatose-1,6-bisphosphate aldolase subunit GatZ from Escherichia coli O7:K1 (strain IAI39 / ExPEC).